We begin with the raw amino-acid sequence, 741 residues long: Aspartyl/asparaginyl beta-hydroxylase (741 aa).

Residues 1-54 form a disordered region; it reads MAPRKNAKGGGGNSSSSGSGSGSGSGSPSTGSSGSSSSPGARREAKHGGHKNGR. At 1-62 the chain is on the cytoplasmic side; it reads MAPRKNAKGG…GRRGGISGGS (62 aa). A compositionally biased stretch (gly residues) spans 8–25; it reads KGGGGNSSSSGSGSGSGS. Ser15 is modified (phosphoserine). Positions 26–40 are enriched in low complexity; the sequence is GSPSTGSSGSSSSPG. The helical; Signal-anchor for type II membrane protein transmembrane segment at 63–83 threads the bilayer; the sequence is FFTWFMVIALLGVWTSVAVVW. Residues 84–741 lie on the Lumenal side of the membrane; it reads FDLVDYEEVL…PQQRRSLPAI (658 aa). Residues Asp100, Asp102, Asp104, Asp106, and Asp111 each coordinate Ca(2+). 2 disordered regions span residues 120–141 and 222–244; these read ERSP…AELE and TASQ…SDPS. Acidic residues predominate over residues 231-242; it reads MEEMTNEQENSD. TPR repeat units follow at residues 324-357, 365-398, 437-470, 472-504, and 508-540; these read IKAE…YPQS, AQCE…PDAP, TTLK…TPND, FAKV…GDPG, and GRFY…GHFA. An N-linked (GlcNAc...) asparagine glycan is attached at Asn453. Residue Trp608 coordinates 2-oxoglutarate. Cys624 and Cys631 form a disulfide bridge. Ser651 serves as a coordination point for 2-oxoglutarate. His662 provides a ligand contact to Fe cation. 671–673 lines the 2-oxoglutarate pocket; sequence RMH. N-linked (GlcNAc...) asparagine glycosylation is present at Asn689. Residue His708 coordinates Fe cation. Arg718 is a 2-oxoglutarate binding site.

Belongs to the aspartyl/asparaginyl beta-hydroxylase family. As to quaternary structure, monomer. Isoform 2 interacts with CASQ2. Requires Fe cation as cofactor. As to expression, isoform 1 is detected in heart, liver and ovary (at protein level). Detected in heart ventricle. Isoform 1 is widely expressed. Isoform 2 is detected in heart and skeletal muscle.

It localises to the endoplasmic reticulum membrane. It is found in the sarcoplasmic reticulum membrane. It carries out the reaction L-aspartyl-[protein] + 2-oxoglutarate + O2 = 3-hydroxy-L-aspartyl-[protein] + succinate + CO2. Functionally, specifically hydroxylates an Asp or Asn residue in certain epidermal growth factor-like (EGF) domains of a number of proteins. This Mus musculus (Mouse) protein is Aspartyl/asparaginyl beta-hydroxylase (Asph).